Reading from the N-terminus, the 320-residue chain is Cytochrome f (320 aa).

An N-terminal signal peptide occupies residues 1–35; that stretch reads MHTKNLFYSRTQQITQYLSALLMMVILTRTSISSA. Heme-binding residues include Tyr-36, Cys-56, Cys-59, and His-60. A helical transmembrane segment spans residues 286–306; that stretch reads VQVLLFFFASIILAQIFLVLK.

The protein belongs to the cytochrome f family. As to quaternary structure, the 4 large subunits of the cytochrome b6-f complex are cytochrome b6, subunit IV (17 kDa polypeptide, petD), cytochrome f and the Rieske protein, while the 4 small subunits are PetG, PetL, PetM and PetN. The complex functions as a dimer. Heme is required as a cofactor.

The protein localises to the plastid thylakoid membrane. Component of the cytochrome b6-f complex, which mediates electron transfer between photosystem II (PSII) and photosystem I (PSI), cyclic electron flow around PSI, and state transitions. In Cuscuta gronovii (Common dodder), this protein is Cytochrome f.